The chain runs to 282 residues: NADPH-dependent 7-cyano-7-deazaguanine reductase (282 aa).

Substrate is bound at residue 82-84 (IES). 84 to 85 (SK) contributes to the NADPH binding site. Cys189 serves as the catalytic Thioimide intermediate. Asp196 acts as the Proton donor in catalysis. Residue 228-229 (HE) participates in substrate binding. 257–258 (RG) provides a ligand contact to NADPH.

It belongs to the GTP cyclohydrolase I family. QueF type 2 subfamily. In terms of assembly, homodimer.

Its subcellular location is the cytoplasm. It catalyses the reaction 7-aminomethyl-7-carbaguanine + 2 NADP(+) = 7-cyano-7-deazaguanine + 2 NADPH + 3 H(+). It functions in the pathway tRNA modification; tRNA-queuosine biosynthesis. Catalyzes the NADPH-dependent reduction of 7-cyano-7-deazaguanine (preQ0) to 7-aminomethyl-7-deazaguanine (preQ1). This is NADPH-dependent 7-cyano-7-deazaguanine reductase from Delftia acidovorans (strain DSM 14801 / SPH-1).